The chain runs to 203 residues: NADH-quinone oxidoreductase subunit C (203 aa).

It belongs to the complex I 30 kDa subunit family. As to quaternary structure, NDH-1 is composed of 14 different subunits. Subunits NuoB, C, D, E, F, and G constitute the peripheral sector of the complex.

It localises to the cell inner membrane. It catalyses the reaction a quinone + NADH + 5 H(+)(in) = a quinol + NAD(+) + 4 H(+)(out). NDH-1 shuttles electrons from NADH, via FMN and iron-sulfur (Fe-S) centers, to quinones in the respiratory chain. The immediate electron acceptor for the enzyme in this species is believed to be ubiquinone. Couples the redox reaction to proton translocation (for every two electrons transferred, four hydrogen ions are translocated across the cytoplasmic membrane), and thus conserves the redox energy in a proton gradient. This is NADH-quinone oxidoreductase subunit C from Polaromonas sp. (strain JS666 / ATCC BAA-500).